The following is a 344-amino-acid chain: L-rhamnose-proton symporter (344 aa).

10 consecutive transmembrane segments (helical) span residues 4–24, 38–58, 68–88, 101–121, 131–151, 175–195, 214–234, 259–279, 290–310, and 323–343; these read AITMGIFWHLIGAASAACFYA, WSVGGIVSWLILPWAISATLL, FSASTLLPVFLFGAMWGIGNI, MGIGIAIGITLIVGTLMTPII, TQGGQMTLLGVLVAVIGVGIV, LLLAVMCGIFSAGMSFAMNAA, LPSYVVIMGGGALVNLGFCFI, LLLSALGGLMWYLQFFFYAWG, MSWMLHMSFYVLCGGVVGLVL, and VLSLGCVVIIIAANIVGLGMA.

It belongs to the L-rhamnose transporter (TC 2.A.7.6) family.

It localises to the cell inner membrane. It carries out the reaction L-rhamnopyranose(in) + H(+)(in) = L-rhamnopyranose(out) + H(+)(out). Its function is as follows. Uptake of L-rhamnose across the cytoplasmic membrane with the concomitant transport of protons into the cell (symport system). This Klebsiella pneumoniae subsp. pneumoniae (strain ATCC 700721 / MGH 78578) protein is L-rhamnose-proton symporter.